The following is a 1325-amino-acid chain: uncharacterized protein (1325 aa).

The signal sequence occupies residues 1–18; sequence MNRIYRVIWNCTLQVFQA. A lipid anchor (N-palmitoyl cysteine) is attached at C19. C19 carries the S-diacylglycerol cysteine lipid modification.

This sequence to E.coli YfaL.

It localises to the cell membrane. This is an uncharacterized protein from Escherichia coli (strain K12).